We begin with the raw amino-acid sequence, 157 residues long: Endoribonuclease YbeY (157 aa).

Zn(2+)-binding residues include histidine 116, histidine 120, and histidine 126.

It belongs to the endoribonuclease YbeY family. The cofactor is Zn(2+).

Its subcellular location is the cytoplasm. Single strand-specific metallo-endoribonuclease involved in late-stage 70S ribosome quality control and in maturation of the 3' terminus of the 16S rRNA. The chain is Endoribonuclease YbeY from Arthrobacter sp. (strain FB24).